Reading from the N-terminus, the 77-residue chain is U9-lycotoxin-Ls1a (77 aa).

A signal peptide spans 1-20; that stretch reads MKLLLFTALVLVVIVSLIEA. A propeptide spanning residues 21–26 is cleaved from the precursor; that stretch reads EAENER.

Belongs to the neurotoxin 19 (CSTX) family. 08 (U8-Lctx) subfamily. Contains 4 disulfide bonds. As to expression, expressed by the venom gland.

The protein resides in the secreted. In Lycosa singoriensis (Wolf spider), this protein is U9-lycotoxin-Ls1a.